An 860-amino-acid chain; its full sequence is Linoleate 9S-lipoxygenase A (860 aa).

A PLAT domain is found at 29 to 159 (NALDFTDLAG…RYKSDRIFFA (131 aa)). A Lipoxygenase domain is found at 162–860 (PYLPSETPEL…GKGIPNSVSI (699 aa)). The tract at residues 209–246 (PDQGKENVRTTLGGSADYPYPRRGRTGRPPTRTDPKSE) is disordered. Fe cation is bound by residues H521, H526, H712, N716, and I860.

This sequence belongs to the lipoxygenase family. As to quaternary structure, monomer. Fe cation serves as cofactor. As to expression, expressed in germinating seeds as well as in ripening fruit.

Its subcellular location is the cytoplasm. It carries out the reaction (9Z,12Z)-octadecadienoate + O2 = (9S)-hydroperoxy-(10E,12Z)-octadecadienoate. The protein operates within lipid metabolism; oxylipin biosynthesis. Functionally, plant lipoxygenase may be involved in a number of diverse aspects of plant physiology including growth and development, pest resistance, and senescence or responses to wounding. It catalyzes the hydroperoxidation of lipids containing a cis,cis-1,4-pentadiene structure. This chain is Linoleate 9S-lipoxygenase A (LOX1.1), found in Solanum lycopersicum (Tomato).